The following is a 344-amino-acid chain: tRNA N6-adenosine threonylcarbamoyltransferase (344 aa).

Residues His111 and His115 each contribute to the Fe cation site. Residues 133–137, Asp166, Gly179, and Asn283 each bind substrate; that span reads LVSGG. Asp311 provides a ligand contact to Fe cation.

It belongs to the KAE1 / TsaD family. It depends on Fe(2+) as a cofactor.

The protein resides in the cytoplasm. It catalyses the reaction L-threonylcarbamoyladenylate + adenosine(37) in tRNA = N(6)-L-threonylcarbamoyladenosine(37) in tRNA + AMP + H(+). In terms of biological role, required for the formation of a threonylcarbamoyl group on adenosine at position 37 (t(6)A37) in tRNAs that read codons beginning with adenine. Is involved in the transfer of the threonylcarbamoyl moiety of threonylcarbamoyl-AMP (TC-AMP) to the N6 group of A37, together with TsaE and TsaB. TsaD likely plays a direct catalytic role in this reaction. This chain is tRNA N6-adenosine threonylcarbamoyltransferase, found in Orientia tsutsugamushi (strain Boryong) (Rickettsia tsutsugamushi).